A 321-amino-acid chain; its full sequence is Leucine-rich repeat-containing protein 46 (321 aa).

LRR repeat units lie at residues 45–66, 67–88, 89–110, and 111–132; these read ELQTVRLDREGITTIRNLEGLK, NLHSLYLQGNKIQQIENLACVP, SLRFLSLAGNQIRQVENLLDLP, and CLQFLDLSENLIETLKLDEFPQ. An LRRCT domain is found at 142–184; sequence NSCTNQDSYRELVIEALPLLLDLDGQPVMERWISDEEDEASSE. Ser175 and Ser182 each carry phosphoserine. Residues 198–222 are a coiled coil; sequence RGFLKELEQELSRHREHRQQAALTQ. A disordered region spans residues 235–321; the sequence is NLPLLPGVPM…TKTMAKRSKK (87 aa).

It is found in the cell projection. The protein resides in the cilium. The protein localises to the flagellum. In terms of biological role, required for normal spermatogenesis and male fertility. Plays an important role in sperm flagellum biogenesis. This chain is Leucine-rich repeat-containing protein 46 (LRRC46), found in Macaca fascicularis (Crab-eating macaque).